The sequence spans 195 residues: Imidazoleglycerol-phosphate dehydratase (195 aa).

The protein belongs to the imidazoleglycerol-phosphate dehydratase family.

Its subcellular location is the cytoplasm. The catalysed reaction is D-erythro-1-(imidazol-4-yl)glycerol 3-phosphate = 3-(imidazol-4-yl)-2-oxopropyl phosphate + H2O. The protein operates within amino-acid biosynthesis; L-histidine biosynthesis; L-histidine from 5-phospho-alpha-D-ribose 1-diphosphate: step 6/9. This chain is Imidazoleglycerol-phosphate dehydratase, found in Methylobacterium radiotolerans (strain ATCC 27329 / DSM 1819 / JCM 2831 / NBRC 15690 / NCIMB 10815 / 0-1).